Consider the following 131-residue polypeptide: Small ribosomal subunit protein uS11 (131 aa).

The protein belongs to the universal ribosomal protein uS11 family. Part of the 30S ribosomal subunit. Interacts with proteins S7 and S18. Binds to IF-3.

In terms of biological role, located on the platform of the 30S subunit, it bridges several disparate RNA helices of the 16S rRNA. Forms part of the Shine-Dalgarno cleft in the 70S ribosome. This Exiguobacterium sibiricum (strain DSM 17290 / CCUG 55495 / CIP 109462 / JCM 13490 / 255-15) protein is Small ribosomal subunit protein uS11.